A 212-amino-acid polypeptide reads, in one-letter code: MKTLEKLFAEKLLKIKAIKLQPANPFTWASGWKSPFYCDNRKTLSYPSLRNFVKLEISRIVLEKFGQVDAIAGVATGAIPQGALVAEELNLPFVYVRSTPKDHGLENLIEGELRPGMKVVVIEDLISTGGSSLKAVEAIRRDGCEVIGMVAAFTYGFPVAIEAFKEAKVNLVTLTNYEAVLDSALKTGYINEEDVPVLDNWRKDPAHWEAGK.

5-phospho-alpha-D-ribose 1-diphosphate-binding positions include Arg-97, Lys-101, His-103, and 123–131; that span reads EDLISTGGS. Residue Ser-127 participates in orotate binding.

The protein belongs to the purine/pyrimidine phosphoribosyltransferase family. PyrE subfamily. Homodimer. Mg(2+) serves as cofactor.

It catalyses the reaction orotidine 5'-phosphate + diphosphate = orotate + 5-phospho-alpha-D-ribose 1-diphosphate. It participates in pyrimidine metabolism; UMP biosynthesis via de novo pathway; UMP from orotate: step 1/2. Catalyzes the transfer of a ribosyl phosphate group from 5-phosphoribose 1-diphosphate to orotate, leading to the formation of orotidine monophosphate (OMP). This is Orotate phosphoribosyltransferase from Phocaeicola vulgatus (strain ATCC 8482 / DSM 1447 / JCM 5826 / CCUG 4940 / NBRC 14291 / NCTC 11154) (Bacteroides vulgatus).